The sequence spans 165 residues: Short form salivary protein D7R4 (165 aa).

The first 21 residues, Met1–Gly21, serve as a signal peptide directing secretion. Disulfide bonds link Cys27–Cys59, Cys40–Cys165, and Cys98–Cys117. 2 residues coordinate noradrenaline: Glu28 and Arg43. Residue Glu28 coordinates serotonin. Serotonin is bound by residues His56, Tyr115, Asp132, and Glu135. Histamine contacts are provided by Tyr115, Asp132, and Glu135. 3 residues coordinate tryptamine: Tyr115, Asp132, and Glu135. Positions 132 and 135 each coordinate noradrenaline.

The protein belongs to the PBP/GOBP family. As to expression, female saliva (at protein level). Female salivary gland. Not detected in female carcass without salivary glands. Not detected in male tissues.

The protein resides in the secreted. Functionally, modulates blood feeding of female mosquitoes on vertebrate species by binding and sequestering different mediators involved in the host response. Binds serotonin, noradrenaline, histamine and tryptamine. Inhibits histamine-, serotonin- and partially noradrenaline-induced smooth muscle contraction. Exhibits vasodilating activity. In Anopheles gambiae (African malaria mosquito), this protein is Short form salivary protein D7R4.